Here is a 464-residue protein sequence, read N- to C-terminus: Soluble pyridine nucleotide transhydrogenase (464 aa).

35-44 lines the FAD pocket; the sequence is DSRREVGGNC.

It belongs to the class-I pyridine nucleotide-disulfide oxidoreductase family. FAD is required as a cofactor.

It localises to the cytoplasm. The catalysed reaction is NAD(+) + NADPH = NADH + NADP(+). Conversion of NADPH, generated by peripheral catabolic pathways, to NADH, which can enter the respiratory chain for energy generation. This is Soluble pyridine nucleotide transhydrogenase from Pseudomonas syringae pv. tomato (strain ATCC BAA-871 / DC3000).